Consider the following 201-residue polypeptide: Interferon-induced transmembrane protein 10 (201 aa).

Disordered stretches follow at residues Met1–Gln23 and Ala60–Ser88. Residues Met1–Tyr127 lie on the Extracellular side of the membrane. The segment covering Ala63–Ala73 has biased composition (pro residues). The helical transmembrane segment at Leu128–Ala148 threads the bilayer. S-palmitoyl cysteine attachment occurs at residues Cys140 and Cys141. The Cytoplasmic segment spans residues Tyr149–Arg173. The helical transmembrane segment at Leu174–Leu194 threads the bilayer. At Arg195–Tyr201 the chain is on the extracellular side.

The protein belongs to the CD225/Dispanin family.

It is found in the cell membrane. This chain is Interferon-induced transmembrane protein 10 (Ifitm10), found in Mus musculus (Mouse).